Consider the following 185-residue polypeptide: MLNEIFNKQKTQSEKSLEALKKDFTTLRTGKVNTHILDHITVDYYGTQTPLNQVATVLASDASTISITPWEKPLLKTIESAIAAANIGVNPNNDGESVKLFFPPMTREQREENVKQAKAMGEKAKVSIRNIRKDANDAVKKLEKDKAISEDEAKKAYDEVQKLTDTYTTKIDESVKNKESELLKV.

The protein belongs to the RRF family.

It localises to the cytoplasm. Its function is as follows. Responsible for the release of ribosomes from messenger RNA at the termination of protein biosynthesis. May increase the efficiency of translation by recycling ribosomes from one round of translation to another. The protein is Ribosome-recycling factor of Campylobacter jejuni (strain RM1221).